A 580-amino-acid chain; its full sequence is MPSGSSESPADALRASDSTPDIKPRSRDVTDGLEKTAARGMLRAVGMGDDDWVKPQIGVGSSWNEITPCNMSLQRLAQSVKGGVHSAGGFPLEFGTISVSDGISMGHEGMHFSLVSREVIADSVETVVQAERLDGTVLLAGCDKSIPGMLMAAARLDLASVFLYNGSIMPGVAKLTDGSEREVTIIDAFEAVGACARGLMSREDVDIIERAICPGEGACGGMYTANTMASAAEALGMSLPGSASPVAIDKRRDEYARRSGEAVVEMLRRGITARDILTKEAFENAIAVVMAFGGSTNAVLHLLAIAWEANVKLTLEDFTRVGQKVPHLADVKPFGRHVMKHVDEIGGVPVVMKALLDAGLMHGDCLTVTGETMAENLAHIEPPDPDGKVLRAMNNPIHPTGGITILHGSLAPEGAVVKSAGFDSDVFEGTARVFERERAALDALEDGTITHGDVVVIRYEGPKGGPGMREMLAITGAIKGAGLGKDVLLMTDGRFSGGTTGLCVGHIAPEAVDGGPIAFVRDGDRIRLDVAKGTLDLLVDEAEFESRKAGFEPLPPVYTTGVLAKYTKLVGSAAVGAVCG.

Residues 1–31 (MPSGSSESPADALRASDSTPDIKPRSRDVTD) form a disordered region. Over residues 20–31 (PDIKPRSRDVTD) the composition is skewed to basic and acidic residues. Cys69 is a [2Fe-2S] cluster binding site. Residue Asp101 coordinates Mg(2+). A [2Fe-2S] cluster-binding site is contributed by Cys142. 2 residues coordinate Mg(2+): Asp143 and Lys144. Position 144 is an N6-carboxylysine (Lys144). Cys219 provides a ligand contact to [2Fe-2S] cluster. Glu470 provides a ligand contact to Mg(2+). Ser496 (proton acceptor) is an active-site residue.

This sequence belongs to the IlvD/Edd family. In terms of assembly, homodimer. It depends on [2Fe-2S] cluster as a cofactor. Mg(2+) serves as cofactor.

It catalyses the reaction (2R)-2,3-dihydroxy-3-methylbutanoate = 3-methyl-2-oxobutanoate + H2O. It carries out the reaction (2R,3R)-2,3-dihydroxy-3-methylpentanoate = (S)-3-methyl-2-oxopentanoate + H2O. It functions in the pathway amino-acid biosynthesis; L-isoleucine biosynthesis; L-isoleucine from 2-oxobutanoate: step 3/4. The protein operates within amino-acid biosynthesis; L-valine biosynthesis; L-valine from pyruvate: step 3/4. In terms of biological role, functions in the biosynthesis of branched-chain amino acids. Catalyzes the dehydration of (2R,3R)-2,3-dihydroxy-3-methylpentanoate (2,3-dihydroxy-3-methylvalerate) into 2-oxo-3-methylpentanoate (2-oxo-3-methylvalerate) and of (2R)-2,3-dihydroxy-3-methylbutanoate (2,3-dihydroxyisovalerate) into 2-oxo-3-methylbutanoate (2-oxoisovalerate), the penultimate precursor to L-isoleucine and L-valine, respectively. The chain is Dihydroxy-acid dehydratase from Mycobacterium sp. (strain JLS).